The chain runs to 62 residues: Amolopin-P1 (62 aa).

Positions 1–22 (MFPMKKSLLLLFFFGPISLSFC) are cleaved as a signal peptide. The propeptide occupies 23–44 (DQERGADEEENGGEVTEQEVKR).

In terms of tissue distribution, expressed by the skin glands.

The protein localises to the secreted. In terms of biological role, antimicrobial peptide with activity against Gram-positive bacteria. Has been tested against S.aureus (MIC=37.5 ug/mL), against B.pumilus (MIC=75.0 ug/mL), B.cereus (no activity detected). Does not show activity against Gram-negative bacteria (E.coli, B.dysenteriae, A.calcoaceticus, P.aeruginosa) and fungi (C.albicans). Does not show hemolytic activity against rabbit erythrocytes. This Amolops loloensis (Lolokou Sucker Frog) protein is Amolopin-P1.